The primary structure comprises 505 residues: Megakaryocyte-associated tyrosine-protein kinase (505 aa).

Residues 46–108 (APGTQCMTKC…AAAALRHGEA (63 aa)) form the SH3 domain. Residues 120–209 (WFHGKISGQE…AICTKLVKPR (90 aa)) enclose the SH2 domain. The 249-residue stretch at 233–481 (LTLGAQIGEG…IVEKLGRELR (249 aa)) folds into the Protein kinase domain. Residues 239 to 247 (IGEGEFGAV) and Lys-260 contribute to the ATP site. The Proton acceptor role is filled by Asp-350. The interval 483–505 (VGVSAPAGGQEAEGSAPTRSQDP) is disordered.

The protein belongs to the protein kinase superfamily. Tyr protein kinase family. CSK subfamily. In terms of assembly, interacts with KIT. In terms of tissue distribution, most abundant in brain, and to a lesser extent in the spleen, the thymus and the liver. Also found in the T-cell lineage.

Its subcellular location is the cytoplasm. The protein localises to the membrane. The catalysed reaction is L-tyrosyl-[protein] + ATP = O-phospho-L-tyrosyl-[protein] + ADP + H(+). In terms of biological role, could play a significant role in the signal transduction of hematopoietic cells. May regulate tyrosine kinase activity of SRC-family members in brain by specifically phosphorylating their C-terminal regulatory tyrosine residue which acts as a negative regulatory site. It may play an inhibitory role in the control of T-cell proliferation. This is Megakaryocyte-associated tyrosine-protein kinase (Matk) from Mus musculus (Mouse).